Consider the following 250-residue polypeptide: Probable transcriptional regulatory protein Rxyl_1318 (250 aa).

It belongs to the TACO1 family.

The protein localises to the cytoplasm. This is Probable transcriptional regulatory protein Rxyl_1318 from Rubrobacter xylanophilus (strain DSM 9941 / JCM 11954 / NBRC 16129 / PRD-1).